The sequence spans 540 residues: Probable H/ACA ribonucleoprotein complex subunit 4 (540 aa).

Positions 1-24 (MTTDKKSKSKSSEKSTQEVEQVIK) are disordered. The active-site Nucleophile is aspartate 109. A PUA domain is found at 280-355 (YKRIVVKDSA…VVATIKRVIM (76 aa)). Residues 414 to 540 (SPVESMNVDT…DKKEKKKSKN (127 aa)) form a disordered region. Positions 448–494 (KKEKKDKKEKKKDSSDDESEEEKSSKKDKKEKKEKKEKKEKKSSKDD) form a coiled coil. Positions 473 to 489 (KKDKKEKKEKKEKKEKK) are enriched in basic residues. 2 stretches are compositionally biased toward basic and acidic residues: residues 490–503 (SSKD…SKKE) and 513–528 (SDKD…DKKD). Basic residues predominate over residues 529-540 (KKDKKEKKKSKN).

This sequence belongs to the pseudouridine synthase TruB family. As to quaternary structure, component of the small nucleolar ribonucleoprotein particles containing H/ACA-type snoRNAs (H/ACA snoRNPs).

It is found in the nucleus. Its subcellular location is the nucleolus. It catalyses the reaction a uridine in RNA = a pseudouridine in RNA. Its function is as follows. Plays a central role in ribosomal RNA processing. Probable catalytic subunit of H/ACA small nucleolar ribonucleoprotein (H/ACA snoRNP) complex, which catalyzes pseudouridylation of rRNA. This involves the isomerization of uridine such that the ribose is subsequently attached to C5, instead of the normal N1. Pseudouridine ('psi') residues may serve to stabilize the conformation of rRNAs. This Dictyostelium discoideum (Social amoeba) protein is Probable H/ACA ribonucleoprotein complex subunit 4 (nola4).